The chain runs to 576 residues: DNA primase (576 aa).

Residues 40–64 (CPFHNEKTPSFNVVAKKQFYHCFGC) form a CHC2-type zinc finger. The Toprim domain occupies 251-333 (DSIIVVEGYM…GLDAGFIFLP (83 aa)). Mg(2+) contacts are provided by Glu257, Asp301, and Asp303.

The protein belongs to the DnaG primase family. Monomer. Interacts with DnaB. Zn(2+) is required as a cofactor. Mg(2+) serves as cofactor.

It carries out the reaction ssDNA + n NTP = ssDNA/pppN(pN)n-1 hybrid + (n-1) diphosphate.. Functionally, RNA polymerase that catalyzes the synthesis of short RNA molecules used as primers for DNA polymerase during DNA replication. The chain is DNA primase from Legionella pneumophila.